A 508-amino-acid chain; its full sequence is Photosystem II CP47 reaction center protein (508 aa).

A run of 6 helical transmembrane segments spans residues 21–36 (AVHIMHTALVAGWAGS), 101–115 (ILFSGLCFLAAIWHW), 140–156 (GIHLFLSGLACFGFGAF), 203–218 (IAAGTLGILAGLFHLS), 237–252 (VLSSSIAAVFFAAFVV), and 457–472 (SFALLFFFGHIWHGAR).

It belongs to the PsbB/PsbC family. PsbB subfamily. PSII is composed of 1 copy each of membrane proteins PsbA, PsbB, PsbC, PsbD, PsbE, PsbF, PsbH, PsbI, PsbJ, PsbK, PsbL, PsbM, PsbT, PsbX, PsbY, PsbZ, Psb30/Ycf12, at least 3 peripheral proteins of the oxygen-evolving complex and a large number of cofactors. It forms dimeric complexes. It depends on Binds multiple chlorophylls. PSII binds additional chlorophylls, carotenoids and specific lipids. as a cofactor.

It localises to the plastid. The protein resides in the chloroplast thylakoid membrane. One of the components of the core complex of photosystem II (PSII). It binds chlorophyll and helps catalyze the primary light-induced photochemical processes of PSII. PSII is a light-driven water:plastoquinone oxidoreductase, using light energy to abstract electrons from H(2)O, generating O(2) and a proton gradient subsequently used for ATP formation. The chain is Photosystem II CP47 reaction center protein from Oenothera argillicola (Appalachian evening primrose).